The primary structure comprises 91 residues: Small ribosomal subunit protein uS19 (91 aa).

It belongs to the universal ribosomal protein uS19 family.

Functionally, protein S19 forms a complex with S13 that binds strongly to the 16S ribosomal RNA. This is Small ribosomal subunit protein uS19 from Verminephrobacter eiseniae (strain EF01-2).